A 77-amino-acid chain; its full sequence is U8-lycotoxin-Ls1g (77 aa).

A signal peptide spans 1-20 (MKLIIFTGLVLFAIVSLIEV). The propeptide occupies 21–26 (QADNER).

The protein belongs to the neurotoxin 19 (CSTX) family. 08 (U8-Lctx) subfamily. Contains 4 disulfide bonds. In terms of tissue distribution, expressed by the venom gland.

The protein resides in the secreted. This Lycosa singoriensis (Wolf spider) protein is U8-lycotoxin-Ls1g.